The primary structure comprises 255 residues: Coniferyl-alcohol dehydrogenase (255 aa).

NAD(+) contacts are provided by residues 12–17 (GVSSGI), Asp36, 51–52 (DL), and Gly77. Ser117 lines the substrate pocket. Residues Tyr157 and Lys161 each coordinate NAD(+). Tyr157 functions as the Proton acceptor in the catalytic mechanism.

It belongs to the short-chain dehydrogenases/reductases (SDR) family.

It catalyses the reaction (E)-coniferol + NADP(+) = (E)-coniferaldehyde + NADPH + H(+). In terms of biological role, catalyzes the conversion of coniferyl alcohol into coniferyl aldehyde in the eugenol degradation pathway. Specific for coniferyl alcohol; does not act on cinnamyl alcohol, 4-coumaryl alcohol or sinapyl alcohol. This Pseudomonas sp. (strain HR199 / DSM 7063) protein is Coniferyl-alcohol dehydrogenase (calA).